A 317-amino-acid chain; its full sequence is NAD kinase (317 aa).

Asp-82 (proton acceptor) is an active-site residue. NAD(+) contacts are provided by residues 82 to 83, Arg-87, 157 to 158, Asp-187, and 198 to 203; these read DG, NE, and TAYAFS.

The protein belongs to the NAD kinase family. The cofactor is a divalent metal cation.

It is found in the cytoplasm. The catalysed reaction is NAD(+) + ATP = ADP + NADP(+) + H(+). Functionally, involved in the regulation of the intracellular balance of NAD and NADP, and is a key enzyme in the biosynthesis of NADP. Catalyzes specifically the phosphorylation on 2'-hydroxyl of the adenosine moiety of NAD to yield NADP. The chain is NAD kinase from Corynebacterium diphtheriae (strain ATCC 700971 / NCTC 13129 / Biotype gravis).